The sequence spans 275 residues: Ribosomal RNA small subunit methyltransferase A (275 aa).

Residues Asn21, Leu23, Gly48, Glu69, Asp94, and Asn115 each contribute to the S-adenosyl-L-methionine site.

It belongs to the class I-like SAM-binding methyltransferase superfamily. rRNA adenine N(6)-methyltransferase family. RsmA subfamily.

It is found in the cytoplasm. The catalysed reaction is adenosine(1518)/adenosine(1519) in 16S rRNA + 4 S-adenosyl-L-methionine = N(6)-dimethyladenosine(1518)/N(6)-dimethyladenosine(1519) in 16S rRNA + 4 S-adenosyl-L-homocysteine + 4 H(+). Specifically dimethylates two adjacent adenosines (A1518 and A1519) in the loop of a conserved hairpin near the 3'-end of 16S rRNA in the 30S particle. May play a critical role in biogenesis of 30S subunits. The sequence is that of Ribosomal RNA small subunit methyltransferase A from Clostridium botulinum (strain Loch Maree / Type A3).